The sequence spans 209 residues: UPF0502 protein PSHAa0076 (209 aa).

The protein belongs to the UPF0502 family.

The chain is UPF0502 protein PSHAa0076 from Pseudoalteromonas translucida (strain TAC 125).